The sequence spans 297 residues: UTP--glucose-1-phosphate uridylyltransferase (297 aa).

It belongs to the UDPGP type 2 family.

It catalyses the reaction alpha-D-glucose 1-phosphate + UTP + H(+) = UDP-alpha-D-glucose + diphosphate. Its pathway is carbohydrate metabolism; nucleotide-sugar metabolism. The protein operates within bacterial outer membrane biogenesis; lipopolysaccharide biosynthesis. Functionally, may play a role in stationary phase survival. This is UTP--glucose-1-phosphate uridylyltransferase (galF) from Salmonella typhimurium (strain LT2 / SGSC1412 / ATCC 700720).